The chain runs to 136 residues: Ribonuclease VapC47 (136 aa).

The region spanning 2–104 is the PINc domain; it reads IYMDTSALTK…AIHLAAAAQI (103 aa). Residues aspartate 5 and aspartate 94 each coordinate Mg(2+).

It belongs to the PINc/VapC protein family. Mg(2+) serves as cofactor.

Its function is as follows. Toxic component of a type II toxin-antitoxin (TA) system. An RNase. Its toxic effect on colony formation is neutralized by coexpression with cognate antitoxin VapB47. In Mycobacterium tuberculosis (strain CDC 1551 / Oshkosh), this protein is Ribonuclease VapC47.